The primary structure comprises 143 residues: Hemoglobin-1 (143 aa).

Residue S2 is modified to N-acetylserine. One can recognise a Globin domain in the interval 2–143 (SLSAAQKDNV…ALMGMIRPNM (142 aa)). Heme b is bound at residue H97.

It belongs to the globin family. Monomer.

It localises to the cytoplasm. Functionally, serves to transport hydrogen sulfide to autotrophic bacteria. This is Hemoglobin-1 from Phacoides pectinatus (Thick lucine).